The primary structure comprises 612 residues: Baculoviral IAP repeat-containing protein 2 (612 aa).

A BIR 1 repeat occupies 46–113; sequence ELYRMSTYSA…RQFYPSCSFV (68 aa). Arg-143 is subject to Omega-N-methylarginine. Position 153 is a phosphoserine (Ser-153). BIR repeat units follow at residues 177-243 and 262-329; these read EEAR…CPFL and HSAR…CEFL. Zn(2+)-binding residues include Cys-299, Cys-302, His-319, and Cys-326. Residues 447 to 537 enclose the CARD domain; sequence MASGDLSLIR…TLYENLFVEK (91 aa). The segment at 565–600 adopts an RING-type zinc-finger fold; it reads CKVCMDREVSIVFIPCGHLVVCQECAPSLRKCPICR.

This sequence belongs to the IAP family. Interacts with DIABLO/SMAC and with PRSS25; these interactions inhibit apoptotic suppressor activity. Interacts with CASP9. Interacts (via BIR domains) with TRAF2; the interaction is required for IKBKE ubiquitination. Interacts with E2F1, RIPK1, RIPK2, RIPK3, RIPK4, BIRC5/survivin and USP19. Interacts with HSP90AB1. Interacts with several death receptors, inclusing FAS, TNFRSF10A and TNFRSF10B. Recruited to TNFRSF10B in the absence of receptor stimulation. When TNFRSF10B is stimulated, further recruited to the receptor and cleaved by caspases. Proteolytic fragments remain associated with TNFRSF10B. Auto-ubiquitinated and degraded by the proteasome in apoptotic cells. Post-translationally, upon stimulation of death receptors, including TNFRSF10B, recruited to receptors and cleaved by caspases. Proteolytic fragments remain associated with the receptors. This cleavage presumably inactivates the protein. Expressed in heart, brain, spleen, lung, liver, skeletal muscle, kidney and testis.

The protein resides in the cytoplasm. It localises to the nucleus. The enzyme catalyses S-ubiquitinyl-[E2 ubiquitin-conjugating enzyme]-L-cysteine + [acceptor protein]-L-lysine = [E2 ubiquitin-conjugating enzyme]-L-cysteine + N(6)-ubiquitinyl-[acceptor protein]-L-lysine.. With respect to regulation, the CARD domain inhibits the activation of E3 ubiquitin ligase activity by preventing RING domain dimerization and E2 ubiquitin donor binding and activation. The CARD domain-mediated autoinhibition of the E3 ubiquitin-protein ligase activity suppresses cell proliferation and migration. USP19 regulates the stability of BIRC2/c-IAP1 by preventing its ubiquitination. Its function is as follows. Multi-functional protein which regulates not only caspases and apoptosis, but also modulates inflammatory signaling and immunity, mitogenic kinase signaling, and cell proliferation, as well as cell invasion and metastasis. Acts as an E3 ubiquitin-protein ligase regulating NF-kappa-B signaling and regulates both canonical and non-canonical NF-kappa-B signaling by acting in opposite directions: acts as a positive regulator of the canonical pathway and suppresses constitutive activation of non-canonical NF-kappa-B signaling. The target proteins for its E3 ubiquitin-protein ligase activity include: RIPK1, RIPK2, RIPK3, RIPK4, CASP3, CASP7, CASP8, TRAF2, DIABLO/SMAC, MAP3K14/NIK, MAP3K5/ASK1, IKBKG/NEMO, IKBKE and MXD1/MAD1. Can also function as an E3 ubiquitin-protein ligase of the NEDD8 conjugation pathway, targeting effector caspases for neddylation and inactivation. Acts as an important regulator of innate immune signaling via regulation of Toll-like receptors (TLRs), Nodlike receptors (NLRs) and RIG-I like receptors (RLRs), collectively referred to as pattern recognition receptors (PRRs). Protects cells from spontaneous formation of the ripoptosome, a large multi-protein complex that has the capability to kill cancer cells in a caspase-dependent and caspase-independent manner. Suppresses ripoptosome formation by ubiquitinating RIPK1 and CASP8. Can stimulate the transcriptional activity of E2F1. Plays a role in the modulation of the cell cycle. In Mus musculus (Mouse), this protein is Baculoviral IAP repeat-containing protein 2 (Birc2).